The primary structure comprises 428 residues: Dihydroorotase (428 aa).

Residues histidine 59 and histidine 61 each contribute to the Zn(2+) site. Substrate contacts are provided by residues histidine 61–arginine 63 and asparagine 93. Residues aspartate 151, histidine 178, and histidine 231 each coordinate Zn(2+). Asparagine 277 contributes to the substrate binding site. Residue aspartate 304 coordinates Zn(2+). Residue aspartate 304 is part of the active site. Residues histidine 308 and phenylalanine 322 to glycine 323 contribute to the substrate site.

This sequence belongs to the metallo-dependent hydrolases superfamily. DHOase family. Class I DHOase subfamily. The cofactor is Zn(2+).

The enzyme catalyses (S)-dihydroorotate + H2O = N-carbamoyl-L-aspartate + H(+). The protein operates within pyrimidine metabolism; UMP biosynthesis via de novo pathway; (S)-dihydroorotate from bicarbonate: step 3/3. Functionally, catalyzes the reversible cyclization of carbamoyl aspartate to dihydroorotate. This is Dihydroorotase from Bacillus cereus (strain AH187).